Reading from the N-terminus, the 386-residue chain is 2-deoxy-scyllo-inosose synthase (386 aa).

NAD(+) contacts are provided by residues Asp-42, 73 to 76 (EEHK), 105 to 109 (GVTGN), 129 to 130 (TT), 140 to 142 (SLK), and 151 to 152 (KN). Lys-142 is an active-site residue. Co(2+) is bound at residue Glu-184. Glu-244 is a catalytic residue. 2 residues coordinate Co(2+): His-247 and His-263.

This sequence belongs to the sugar phosphate cyclases superfamily. DOI synthase family. It depends on NAD(+) as a cofactor. Requires Co(2+) as cofactor.

The enzyme catalyses D-glucose 6-phosphate = 2-deoxy-L-scyllo-inosose + phosphate. The protein operates within metabolic intermediate biosynthesis; 2-deoxystreptamine biosynthesis; 2-deoxystreptamine from D-glucose 6-phosphate: step 1/4. It participates in antibiotic biosynthesis; tobramycin biosynthesis. Its function is as follows. Catalyzes the intramolecular carbocycle formation from D-glucose-6-phosphate to 2-deoxy-scyllo-inosose (DOI). The chain is 2-deoxy-scyllo-inosose synthase (tbmA) from Streptoalloteichus tenebrarius (strain ATCC 17920 / DSM 40477 / JCM 4838 / CBS 697.72 / NBRC 16177 / NCIMB 11028 / NRRL B-12390 / A12253. 1 / ISP 5477) (Streptomyces tenebrarius).